The sequence spans 355 residues: Peptide chain release factor 1 (355 aa).

The residue at position 233 (Gln233) is an N5-methylglutamine.

The protein belongs to the prokaryotic/mitochondrial release factor family. Methylated by PrmC. Methylation increases the termination efficiency of RF1.

It is found in the cytoplasm. Its function is as follows. Peptide chain release factor 1 directs the termination of translation in response to the peptide chain termination codons UAG and UAA. The protein is Peptide chain release factor 1 of Desulfitobacterium hafniense (strain DSM 10664 / DCB-2).